The sequence spans 865 residues: DNA topoisomerase 1 (865 aa).

In terms of domain architecture, Toprim spans 3-142; the sequence is KALVIVESPA…RYSRVVFNEI (140 aa). Glu-9 contributes to the Mg(2+) binding site. The tract at residues 37–65 is disordered; that stretch reads LPTSGSAAKKSADSTSTKTAKKPKKDERG. Over residues 39–54 the composition is skewed to low complexity; the sequence is TSGSAAKKSADSTSTK. Asp-111 contributes to the Mg(2+) binding site. One can recognise a Topo IA-type catalytic domain in the interval 158–575; sequence NIDRVNAQQA…HFFSDFTQQL (418 aa). An interaction with DNA region spans residues 192–197; that stretch reads SAGRVQ. Tyr-319 (O-(5'-phospho-DNA)-tyrosine intermediate) is an active-site residue. 3 C4-type zinc fingers span residues 599-630, 662-689, and 711-736; these read CPTC…KERC, CPKC…NPTC, and CEKC…NEEC.

It belongs to the type IA topoisomerase family. In terms of assembly, monomer. It depends on Mn(2+) as a cofactor. Ca(2+) is required as a cofactor.

It carries out the reaction ATP-independent breakage of single-stranded DNA, followed by passage and rejoining.. Releases the supercoiling and torsional tension of DNA, which is introduced during the DNA replication and transcription, by transiently cleaving and rejoining one strand of the DNA duplex. Introduces a single-strand break via transesterification at a target site in duplex DNA. The scissile phosphodiester is attacked by the catalytic tyrosine of the enzyme, resulting in the formation of a DNA-(5'-phosphotyrosyl)-enzyme intermediate and the expulsion of a 3'-OH DNA strand. The free DNA strand then undergoes passage around the unbroken strand, thus removing DNA supercoils. Finally, in the religation step, the DNA 3'-OH attacks the covalent intermediate to expel the active-site tyrosine and restore the DNA phosphodiester backbone. This is DNA topoisomerase 1 from Escherichia coli (strain K12).